We begin with the raw amino-acid sequence, 138 residues long: Small ribosomal subunit protein uS11 (138 aa).

The span at 1 to 12 (MPPKKAAASSAK) shows a compositional bias: low complexity. The disordered stretch occupies residues 1–28 (MPPKKAAASSAKKGQKTRRREKKNVPHG). Residues 13-22 (KGQKTRRREK) are compositionally biased toward basic residues.

Belongs to the universal ribosomal protein uS11 family. In terms of assembly, part of the 30S ribosomal subunit. Interacts with proteins S7 and S18. Binds to IF-3.

In terms of biological role, located on the platform of the 30S subunit, it bridges several disparate RNA helices of the 16S rRNA. Forms part of the Shine-Dalgarno cleft in the 70S ribosome. This is Small ribosomal subunit protein uS11 from Mycobacterium sp. (strain JLS).